The primary structure comprises 89 residues: MATKKAGGSSKNGRDSAGRRLGLKKSDGQLVNAGNIIVKQRGTKFYPGKNVGLGKDHTIFSLVSGKVKFFRKKKNRVFISVVVDDSTAA.

Positions 1 to 26 are disordered; sequence MATKKAGGSSKNGRDSAGRRLGLKKS.

The protein belongs to the bacterial ribosomal protein bL27 family.

This Orientia tsutsugamushi (strain Ikeda) (Rickettsia tsutsugamushi) protein is Large ribosomal subunit protein bL27.